We begin with the raw amino-acid sequence, 59 residues long: U-actitoxin-Aer2a (59 aa).

In terms of processing, contains 5 disulfide bonds.

It is found in the secreted. It localises to the nematocyst. This Anemonia erythraea (Sea anemone) protein is U-actitoxin-Aer2a.